The chain runs to 127 residues: Aspartate 1-decarboxylase (127 aa).

The active-site Schiff-base intermediate with substrate; via pyruvic acid is S25. S25 is modified (pyruvic acid (Ser)). A substrate-binding site is contributed by T57. Residue Y58 is the Proton donor of the active site. 73-75 (GAA) is a substrate binding site.

It belongs to the PanD family. In terms of assembly, heterooctamer of four alpha and four beta subunits. It depends on pyruvate as a cofactor. Is synthesized initially as an inactive proenzyme, which is activated by self-cleavage at a specific serine bond to produce a beta-subunit with a hydroxyl group at its C-terminus and an alpha-subunit with a pyruvoyl group at its N-terminus.

Its subcellular location is the cytoplasm. The enzyme catalyses L-aspartate + H(+) = beta-alanine + CO2. Its pathway is cofactor biosynthesis; (R)-pantothenate biosynthesis; beta-alanine from L-aspartate: step 1/1. Its function is as follows. Catalyzes the pyruvoyl-dependent decarboxylation of aspartate to produce beta-alanine. The chain is Aspartate 1-decarboxylase from Halalkalibacterium halodurans (strain ATCC BAA-125 / DSM 18197 / FERM 7344 / JCM 9153 / C-125) (Bacillus halodurans).